The chain runs to 428 residues: Palmitoyltransferase pfa4 (428 aa).

Over 1–10 the chain is Cytoplasmic; it reads MLCRSFNISQ. A helical transmembrane segment spans residues 11–31; that stretch reads LAIPFVSVLISFLAYTSQLFF. The Lumenal portion of the chain corresponds to 32-43; the sequence is YYFEEAPLRSEE. A helical membrane pass occupies residues 44 to 61; it reads FWRLNIFAVCIWVCYYRA. The Cytoplasmic segment spans residues 62-134; that stretch reads CTVDPGRIPK…SNCVSHFTYP (73 aa). A DHHC domain is found at 91-141; sequence RWCRRCEAFKPPRAHHCKTCQRCIPKMDHHCPWTSNCVSHFTYPHFMRFLF. The active-site S-palmitoyl cysteine intermediate is the Cys121. Residues 135-155 form a helical membrane-spanning segment; that stretch reads HFMRFLFYAVVGMGYLETLLF. The Lumenal portion of the chain corresponds to 156–177; that stretch reads ERASIVWASRHLPSYLGPGLGQ. A helical transmembrane segment spans residues 178–198; it reads LVHLFILLVVNSLTWLALFIL. Topologically, residues 199–428 are cytoplasmic; sequence LLRSIWSLAL…GILMQRRRQQ (230 aa). A disordered region spans residues 339–400; the sequence is QRSNDASHSG…WKNSEGDRLR (62 aa). Positions 360–373 are enriched in basic and acidic residues; sequence DRFNENKAKERLSE. Residues 374–388 show a composition bias toward acidic residues; it reads SESDFSDDEEVQDGE. The segment covering 389 to 400 has biased composition (basic and acidic residues); sequence EGWKNSEGDRLR.

This sequence belongs to the DHHC palmitoyltransferase family. PFA4 subfamily.

It is found in the endoplasmic reticulum membrane. The catalysed reaction is L-cysteinyl-[protein] + hexadecanoyl-CoA = S-hexadecanoyl-L-cysteinyl-[protein] + CoA. Mediates the reversible addition of palmitate to target proteins, thereby regulating their membrane association and biological function. This chain is Palmitoyltransferase pfa4, found in Aspergillus fumigatus (strain ATCC MYA-4609 / CBS 101355 / FGSC A1100 / Af293) (Neosartorya fumigata).